Reading from the N-terminus, the 116-residue chain is NADH-ubiquinone oxidoreductase chain 3 (116 aa).

The next 3 helical transmembrane spans lie at 3–23, 56–76, and 87–107; these read LIMT…TVSF, FFLV…LLPL, and GTFF…IYEW.

Belongs to the complex I subunit 3 family.

The protein resides in the mitochondrion membrane. It catalyses the reaction a ubiquinone + NADH + 5 H(+)(in) = a ubiquinol + NAD(+) + 4 H(+)(out). In terms of biological role, core subunit of the mitochondrial membrane respiratory chain NADH dehydrogenase (Complex I) that is believed to belong to the minimal assembly required for catalysis. Complex I functions in the transfer of electrons from NADH to the respiratory chain. The immediate electron acceptor for the enzyme is believed to be ubiquinone. The protein is NADH-ubiquinone oxidoreductase chain 3 (MT-ND3) of Carassius auratus (Goldfish).